A 478-amino-acid polypeptide reads, in one-letter code: Early growth response protein 4 (478 aa).

A disordered region spans residues 15–37 (SKPTEGCAHTSPELPRLPARDAP). 3 consecutive C2H2-type zinc fingers follow at residues 372–396 (FACP…LRIH), 402–424 (FQCR…VRTH), and 430–452 (FACD…SKVH).

The protein belongs to the EGR C2H2-type zinc-finger protein family.

The protein localises to the nucleus. Its function is as follows. Transcriptional regulator. Recognizes and binds to the DNA sequence 5'-GCGGGGGCG-3' (GSG). Activates the transcription of target genes whose products are required for mitogenesis and differentiation. The protein is Early growth response protein 4 (Egr4) of Rattus norvegicus (Rat).